Reading from the N-terminus, the 266-residue chain is Non-structural maintenance of chromosomes element 1 homolog (266 aa).

The tract at residues 1–102 (MQGSTRRMSV…SISKMATDFA (102 aa)) is interaction with NSMCE3. Residues 191-232 (CNICHSLLIQGQSCETCGIRMHLPCVAKYFQSNAEPRCPHCN) form an RING-type; atypical zinc finger. Residues 245-266 (PEKERESGVSKSNKKSLRSRQH) form a disordered region. Phosphoserine is present on S251. Over residues 256 to 266 (SNKKSLRSRQH) the composition is skewed to basic residues.

Belongs to the NSE1 family. In terms of assembly, component of the SMC5-SMC6 complex which consists at least of SMC5, SMC6, NSMCE2, NSMCE1, NSMCE4A or EID3 and NSMCE3. NSMCE1, NSMCE4A or EID3 and NSMCE3 probably form a subcomplex that bridges the head domains of the SMC5-SMC6 heterodimer. Interacts with NSMCE3. In terms of processing, ubiquitinated.

It localises to the nucleus. The protein localises to the chromosome. The protein resides in the telomere. It catalyses the reaction S-ubiquitinyl-[E2 ubiquitin-conjugating enzyme]-L-cysteine + [acceptor protein]-L-lysine = [E2 ubiquitin-conjugating enzyme]-L-cysteine + N(6)-ubiquitinyl-[acceptor protein]-L-lysine.. RING-type zinc finger-containing E3 ubiquitin ligase that assembles with melanoma antigen protein (MAGE) to catalyze the direct transfer of ubiquitin from E2 ubiquitin-conjugating enzyme to a specific substrate. Within MAGE-RING ubiquitin ligase complex, MAGE stimulates and specifies ubiquitin ligase activity likely through recruitment and/or stabilization of the E2 ubiquitin-conjugating enzyme at the E3:substrate complex. Involved in maintenance of genome integrity, DNA damage response and DNA repair. NSMCE3/MAGEG1 and NSMCE1 ubiquitin ligase are components of SMC5-SMC6 complex and may positively regulate homologous recombination-mediated DNA repair. The protein is Non-structural maintenance of chromosomes element 1 homolog (NSMCE1) of Pongo abelii (Sumatran orangutan).